We begin with the raw amino-acid sequence, 231 residues long: Proteasome subunit alpha type-2 (231 aa).

The protein belongs to the peptidase T1A family. In terms of assembly, the 26S proteasome consists of a 20S proteasome core and two 19S regulatory subunits. The 20S proteasome core is composed of 28 subunits that are arranged in four stacked rings, resulting in a barrel-shaped structure. The two end rings are each formed by seven alpha subunits, and the two central rings are each formed by seven beta subunits. The catalytic chamber with the active sites is on the inside of the barrel.

It localises to the cytoplasm. It is found in the nucleus. Its function is as follows. The proteasome is a multicatalytic proteinase complex which is characterized by its ability to cleave peptides with Arg, Phe, Tyr, Leu, and Glu adjacent to the leaving group at neutral or slightly basic pH. The proteasome has an ATP-dependent proteolytic activity. In Trypanosoma brucei brucei, this protein is Proteasome subunit alpha type-2.